Reading from the N-terminus, the 280-residue chain is MRLILISGLSGSGKSVALRALEDSGFYCVDNLPATMLPEAMAMYDDFGYQDIAISVDTRSGPSLGALPQVVEGLKTQGIDVRLLFLEAKPETLVKRFSETRRRHPLSGSGITVEESILLEQEMLADVLELGTRIDTSELSANALRSWVRELVDADGNRLTLIFESFGFKHGVPQDADFVFDARCLPNPYYDPQLRPFTGRDEPIIDFFSGNKAVAEMIADIQAMIAKWLPCYGKENRSYLTVAVGCTGGQHRSVYIIENLARAFSDRQVLVRHRQLYREH.

8–15 (GLSGSGKS) is a binding site for ATP. GTP is bound at residue 57 to 60 (DTRS).

Belongs to the RapZ-like family.

Displays ATPase and GTPase activities. The polypeptide is Nucleotide-binding protein CV_3336 (Chromobacterium violaceum (strain ATCC 12472 / DSM 30191 / JCM 1249 / CCUG 213 / NBRC 12614 / NCIMB 9131 / NCTC 9757 / MK)).